A 167-amino-acid polypeptide reads, in one-letter code: NADH-quinone oxidoreductase subunit B (167 aa).

[4Fe-4S] cluster contacts are provided by Cys40, Cys41, Cys105, and Cys134.

This sequence belongs to the complex I 20 kDa subunit family. NDH-1 is composed of 14 different subunits. Subunits NuoB, C, D, E, F, and G constitute the peripheral sector of the complex. Requires [4Fe-4S] cluster as cofactor.

The protein resides in the cell inner membrane. The enzyme catalyses a quinone + NADH + 5 H(+)(in) = a quinol + NAD(+) + 4 H(+)(out). NDH-1 shuttles electrons from NADH, via FMN and iron-sulfur (Fe-S) centers, to quinones in the respiratory chain. The immediate electron acceptor for the enzyme in this species is believed to be ubiquinone. Couples the redox reaction to proton translocation (for every two electrons transferred, four hydrogen ions are translocated across the cytoplasmic membrane), and thus conserves the redox energy in a proton gradient. In Campylobacter jejuni (strain RM1221), this protein is NADH-quinone oxidoreductase subunit B.